Reading from the N-terminus, the 153-residue chain is Ribonuclease K6 (153 aa).

Positions 1 to 27 are cleaved as a signal peptide; sequence MVVDLPRYLPLLLLLELWEPMYLLCSQ. His41 serves as the catalytic Proton acceptor. Disulfide bonds link Cys49-Cys107, Cys63-Cys117, Cys81-Cys132, and Cys88-Cys95. Asn58 carries N-linked (GlcNAc...) asparagine glycosylation. 64 to 68 contributes to the substrate binding site; sequence KQINT. The N-linked (GlcNAc...) asparagine glycan is linked to Asn85. A substrate-binding site is contributed by Lys89. His148 serves as the catalytic Proton donor.

It belongs to the pancreatic ribonuclease family. Interacts (via N-terminus) with bacterial lipopolysaccharide (LPS). As to expression, highly expressed in spleen (at protein level). Has little or no expression in healthy kidneys (at protein level). Detected at high levels in infected kidneys (at protein level). Expressed at low levels in bladder. Also detected in skeletal muscle, heart and bone marrow.

The protein resides in the secreted. It localises to the lysosome. Its subcellular location is the cytoplasmic granule. In terms of biological role, ribonuclease which shows a preference for the pyrimidines uridine and cytosine. Has potent antibacterial activity against a range of Gram-positive and Gram-negative bacteria, including P.aeruginosa, A.baumanii, M.luteus, S.aureus, E.faecalis, E.faecium, S.saprophyticus and E.coli. Causes loss of bacterial membrane integrity, and also promotes agglutination of Gram-negative bacteria. Probably contributes to urinary tract sterility. Bactericidal activity is independent of RNase activity. This chain is Ribonuclease K6 (Rnase6), found in Mus musculus (Mouse).